A 165-amino-acid chain; its full sequence is Regulator of ribonuclease activity A (165 aa).

The protein belongs to the RraA family. As to quaternary structure, homotrimer. Binds to both RNA-binding sites in the C-terminal region of Rne and to RhlB.

It localises to the cytoplasm. Functionally, globally modulates RNA abundance by binding to RNase E (Rne) and regulating its endonucleolytic activity. Can modulate Rne action in a substrate-dependent manner by altering the composition of the degradosome. Modulates RNA-binding and helicase activities of the degradosome. This chain is Regulator of ribonuclease activity A, found in Actinobacillus pleuropneumoniae serotype 7 (strain AP76).